The following is a 311-amino-acid chain: Probable manganese-dependent inorganic pyrophosphatase (311 aa).

Mn(2+) is bound by residues His9, Asp13, Asp15, Asp75, His97, and Asp149.

It belongs to the PPase class C family. It depends on Mn(2+) as a cofactor.

The protein localises to the cytoplasm. The catalysed reaction is diphosphate + H2O = 2 phosphate + H(+). The sequence is that of Probable manganese-dependent inorganic pyrophosphatase from Lactobacillus gasseri (strain ATCC 33323 / DSM 20243 / BCRC 14619 / CIP 102991 / JCM 1131 / KCTC 3163 / NCIMB 11718 / NCTC 13722 / AM63).